Reading from the N-terminus, the 76-residue chain is Brevinin-2ISa (76 aa).

The signal sequence occupies residues Met1–Cys22. Residues Glu23–Val41 constitute a propeptide, removed in mature form. The cysteines at positions 70 and 76 are disulfide-linked.

In terms of tissue distribution, expressed by the skin glands.

The protein localises to the secreted. Has antimicrobial activity against Gram-negative bacterium E.coli ATCC 8739 (MIC=50 ug), against Gram positive bacteria S.aureus ATCC 6538 (MIC=12.5 ug), methicillin-resistant S.aureus ATCC 43300 (MIC=100 ug) and B.subtilis ATCC 6633 (MIC=12.5 ug). Has no activity against fungus C.albicans ATCC 90028. The sequence is that of Brevinin-2ISa from Odorrana ishikawae (Ishikawa's frog).